Reading from the N-terminus, the 155-residue chain is 6,7-dimethyl-8-ribityllumazine synthase (155 aa).

5-amino-6-(D-ribitylamino)uracil-binding positions include Phe-23, 57-59, and 80-82; these read AFE and AVI. Residue 85 to 86 coordinates (2S)-2-hydroxy-3-oxobutyl phosphate; it reads AT. His-88 serves as the catalytic Proton donor. A 5-amino-6-(D-ribitylamino)uracil-binding site is contributed by Tyr-113. Arg-127 serves as a coordination point for (2S)-2-hydroxy-3-oxobutyl phosphate.

Belongs to the DMRL synthase family.

The enzyme catalyses (2S)-2-hydroxy-3-oxobutyl phosphate + 5-amino-6-(D-ribitylamino)uracil = 6,7-dimethyl-8-(1-D-ribityl)lumazine + phosphate + 2 H2O + H(+). It functions in the pathway cofactor biosynthesis; riboflavin biosynthesis; riboflavin from 2-hydroxy-3-oxobutyl phosphate and 5-amino-6-(D-ribitylamino)uracil: step 1/2. Its function is as follows. Catalyzes the formation of 6,7-dimethyl-8-ribityllumazine by condensation of 5-amino-6-(D-ribitylamino)uracil with 3,4-dihydroxy-2-butanone 4-phosphate. This is the penultimate step in the biosynthesis of riboflavin. The sequence is that of 6,7-dimethyl-8-ribityllumazine synthase from Moorella thermoacetica (strain ATCC 39073 / JCM 9320).